The sequence spans 1516 residues: AP-4 complex accessory subunit RUSC2 (1516 aa).

Disordered stretches follow at residues 33-105, 202-224, 229-248, 331-351, 404-445, and 478-511; these read AGGG…PFLL, LDEC…SGFS, WKLS…SGDQ, SKMS…GYGC, LSSQ…PSEY, and GQVY…PVRL. Over residues 66 to 81 the composition is skewed to polar residues; that stretch reads LFSSLHSTPGGTARSI. Over residues 82 to 92 the composition is skewed to basic and acidic residues; that stretch reads DSTKSRSRDGR. The segment covering 206–217 has biased composition (gly residues); sequence GGPGGSGSGGGA. Residues 333–344 are compositionally biased toward basic and acidic residues; that stretch reads MSYESHHPESGG. Low complexity predominate over residues 405-420; it reads SSQSSPSPAGSSITSC. Positions 428–440 are enriched in pro residues; it reads SPPPGPGPDPGPS. The segment covering 480-493 has biased composition (polar residues); sequence VYTNTSPPNLSTGR. Residues S536, S543, and S559 each carry the phosphoserine modification. 4 disordered regions span residues 550-588, 646-688, 727-836, and 868-889; these read GRKK…APLD, LMDP…KEQR, RTQQ…PQKE, and ESLA…ANHL. Positions 567–579 are enriched in polar residues; the sequence is GDSSQEFSPIQEA. S656 is modified (phosphoserine). The span at 729 to 746 shows a compositional bias: low complexity; that stretch reads QQPAPLAAPAAQVSVPAP. S781 carries the post-translational modification Phosphoserine. Low complexity predominate over residues 791–801; the sequence is PSTDSSASTSC. Residues 1031-1175 enclose the RUN domain; sequence NVGHLVLKYL…LPFSLDLLFQ (145 aa). 3 disordered regions span residues 1210-1261, 1286-1408, and 1422-1449; these read RARG…GRAR, IEGS…LPSD, and QTVG…SSPP. The span at 1219 to 1230 shows a compositional bias: basic and acidic residues; that stretch reads DVDRAAQGERVK. The span at 1237–1251 shows a compositional bias: acidic residues; that stretch reads GGEEEEEEEETEEVA. Basic and acidic residues predominate over residues 1355–1364; sequence ELRRSREREG. A phosphoserine mark is found at S1368 and S1380. The span at 1426–1437 shows a compositional bias: basic and acidic residues; that stretch reads SRREPEPKESLQ. One can recognise an SH3 domain in the interval 1447–1506; the sequence is SPPCEVQALCHHLATGPGQLSFHKGDILRVLGRAGGDWLRCSRGPDSGLVPLAYVTLTPT.

As to quaternary structure, associated component of the adapter-like complex 4 (AP-4). Interacts with active RAB1A and RAB1B, and with GOLGA2. Interacts (via RUN domain) with RAB35 (GTP-bound form); the interaction recruits RUSC2 to the plasma membrane. As to expression, widely expressed, with highest levels in brain and testis.

The protein resides in the cytoplasm. The protein localises to the cytosol. It localises to the cell membrane. Associates with the adapter-like complex 4 (AP-4) and may therefore play a role in vesicular trafficking of proteins at the trans-Golgi network. The sequence is that of AP-4 complex accessory subunit RUSC2 from Homo sapiens (Human).